Reading from the N-terminus, the 49-residue chain is Large ribosomal subunit protein bL33A (49 aa).

It belongs to the bacterial ribosomal protein bL33 family.

This is Large ribosomal subunit protein bL33A from Staphylococcus aureus (strain Mu3 / ATCC 700698).